Consider the following 102-residue polypeptide: ATP-dependent Clp protease adapter protein ClpS (102 aa).

It belongs to the ClpS family. Binds to the N-terminal domain of the chaperone ClpA.

In terms of biological role, involved in the modulation of the specificity of the ClpAP-mediated ATP-dependent protein degradation. This is ATP-dependent Clp protease adapter protein ClpS from Wolinella succinogenes (strain ATCC 29543 / DSM 1740 / CCUG 13145 / JCM 31913 / LMG 7466 / NCTC 11488 / FDC 602W) (Vibrio succinogenes).